The chain runs to 359 residues: Peptide chain release factor 1 (359 aa).

At Gln-235 the chain carries N5-methylglutamine.

It belongs to the prokaryotic/mitochondrial release factor family. Post-translationally, methylated by PrmC. Methylation increases the termination efficiency of RF1.

It is found in the cytoplasm. Its function is as follows. Peptide chain release factor 1 directs the termination of translation in response to the peptide chain termination codons UAG and UAA. The chain is Peptide chain release factor 1 from Aromatoleum aromaticum (strain DSM 19018 / LMG 30748 / EbN1) (Azoarcus sp. (strain EbN1)).